A 455-amino-acid polypeptide reads, in one-letter code: Probable 1,4-beta-D-glucan cellobiohydrolase A (455 aa).

The first 17 residues, 1–17, serve as a signal peptide directing secretion; it reads MHQRALLFSAFWTAVQA. The N-linked (GlcNAc...) asparagine glycan is linked to Asn81. Catalysis depends on Glu227, which acts as the Nucleophile. Glu232 acts as the Proton donor in catalysis. Asn285 carries N-linked (GlcNAc...) asparagine glycosylation.

It belongs to the glycosyl hydrolase 7 (cellulase C) family.

The protein resides in the secreted. It catalyses the reaction Hydrolysis of (1-&gt;4)-beta-D-glucosidic linkages in cellulose and cellotetraose, releasing cellobiose from the non-reducing ends of the chains.. In terms of biological role, the biological conversion of cellulose to glucose generally requires three types of hydrolytic enzymes: (1) Endoglucanases which cut internal beta-1,4-glucosidic bonds; (2) Exocellobiohydrolases that cut the disaccharide cellobiose from the non-reducing end of the cellulose polymer chain; (3) Beta-1,4-glucosidases which hydrolyze the cellobiose and other short cello-oligosaccharides to glucose. This is Probable 1,4-beta-D-glucan cellobiohydrolase A (cbhA) from Aspergillus flavus (strain ATCC 200026 / FGSC A1120 / IAM 13836 / NRRL 3357 / JCM 12722 / SRRC 167).